The sequence spans 319 residues: ATP-dependent 6-phosphofructokinase (319 aa).

ATP contacts are provided by residues Gly-11, 72-73 (RS), and 102-105 (GDGS). Asp-103 lines the Mg(2+) pocket. 126–128 (TID) serves as a coordination point for substrate. Catalysis depends on Asp-128, which acts as the Proton acceptor. Residue Arg-155 participates in ADP binding. Residues Arg-163 and 170–172 (MGR) contribute to the substrate site. Residue 186-188 (GAE) participates in ADP binding. Residues Glu-223, Arg-245, and 251–254 (HTQR) each bind substrate.

It belongs to the phosphofructokinase type A (PFKA) family. ATP-dependent PFK group I subfamily. Prokaryotic clade 'B1' sub-subfamily. In terms of assembly, homotetramer. The cofactor is Mg(2+).

The protein resides in the cytoplasm. The catalysed reaction is beta-D-fructose 6-phosphate + ATP = beta-D-fructose 1,6-bisphosphate + ADP + H(+). It participates in carbohydrate degradation; glycolysis; D-glyceraldehyde 3-phosphate and glycerone phosphate from D-glucose: step 3/4. Allosterically activated by ADP and other diphosphonucleosides, and allosterically inhibited by phosphoenolpyruvate. Functionally, catalyzes the phosphorylation of D-fructose 6-phosphate to fructose 1,6-bisphosphate by ATP, the first committing step of glycolysis. This chain is ATP-dependent 6-phosphofructokinase, found in Sulfurimonas denitrificans (strain ATCC 33889 / DSM 1251) (Thiomicrospira denitrificans (strain ATCC 33889 / DSM 1251)).